Reading from the N-terminus, the 429-residue chain is Chaperone SurA (429 aa).

An N-terminal signal peptide occupies residues 1-18 (MFKRIALVCALFSGICFA). 2 consecutive PpiC domains span residues 170-271 (NLTY…KLVA) and 281-380 (ITQT…EVIA).

It is found in the periplasm. The catalysed reaction is [protein]-peptidylproline (omega=180) = [protein]-peptidylproline (omega=0). Chaperone involved in the correct folding and assembly of outer membrane proteins. Recognizes specific patterns of aromatic residues and the orientation of their side chains, which are found more frequently in integral outer membrane proteins. May act in both early periplasmic and late outer membrane-associated steps of protein maturation. The sequence is that of Chaperone SurA from Legionella pneumophila (strain Paris).